Consider the following 1170-residue polypeptide: Short transient receptor potential channel 2 (1170 aa).

Residues 1–627 lie on the Cytoplasmic side of the membrane; the sequence is MLMSLTDSKE…GWRGSTTIWK (627 aa). Disordered stretches follow at residues 64–113, 142–231, and 322–342; these read SLSD…QTST, AHKA…QATG, and ESGS…VEES. Over residues 74–85 the composition is skewed to polar residues; the sequence is SPGSSGLNQNSS. Over residues 158-177 the composition is skewed to basic and acidic residues; the sequence is GEPDSSHPERAEPRAEEPNR. ANK repeat units lie at residues 300–329, 346–376, 377–405, and 429–458; these read KFPP…DPSG, SWRE…DFRQ, IHEA…REKG, and PGVT…TIAR. A helical transmembrane segment spans residues 628 to 648; sequence LFVAFLIFLTMPFLCIGYWLA. Topologically, residues 649–658 are extracellular; sequence PKSRLGRLLK. The chain crosses the membrane as a helical span at residues 659–679; that stretch reads IPVLKFLLHSASYLWFLIFLL. Residues 680 to 701 are Cytoplasmic-facing; it reads GESLVMETQLSTFKGRSQSVWE. The helical transmembrane segment at 702-722 threads the bilayer; it reads TSLHMIWVTGFLWFECKEVWI. The Extracellular segment spans residues 723–737; the sequence is EGLRSYLLDWWNFLD. Residues 738–758 traverse the membrane as a helical segment; that stretch reads VVILSLYLASFALRLLLAGLA. The Cytoplasmic segment spans residues 759–788; that stretch reads YMHCRDASDSSTCRYFTTAERSEWRTEDPQ. A helical membrane pass occupies residues 789-809; sequence FLAEVLFAVTSMLSFTRLAYI. Over 810–832 the chain is Extracellular; the sequence is LPAHESLGTLQISIGKMIDDMIR. The chain crosses the membrane as a helical span at residues 833–853; it reads FMFILMIILTAFLCGLNNIYV. The Cytoplasmic segment spans residues 854-898; sequence PYQETEKLGNFNETFQFLFWTMFGMEEHSVVDMPQFLVPEFVGRA. A helical membrane pass occupies residues 899–919; it reads MYGIFTIVMVIVLLNMLIAMI. Residues 920-1170 are Extracellular-facing; the sequence is TNSFQKIEDD…GEDLETKGES (251 aa). Residues 1030–1068 adopt a coiled-coil conformation; that stretch reads RREFEETRRKDLGNRLTELTKTVSRLQSEVASVQKTVAA. A disordered region spans residues 1118–1170; the sequence is LEDSLDATGEAGTPASGESSSSSSAHVLVHREQEAEGAGDLPLGEDLETKGES.

It belongs to the transient receptor (TC 1.A.4) family. STrpC subfamily. TRPC2 sub-subfamily. Expressed exclusively in vomeronasal organ neurons (sensory microvilli).

The protein resides in the membrane. Thought to form a receptor-activated calcium permeant cation channel. Probably is operated by a phosphatidylinositol second messenger system activated by receptor tyrosine kinases or G-protein coupled receptors. Is not activated by intracellular calcium store depletion. This chain is Short transient receptor potential channel 2 (Trpc2), found in Rattus norvegicus (Rat).